The sequence spans 156 residues: Small ribosomal subunit protein uS7c (156 aa).

This sequence belongs to the universal ribosomal protein uS7 family. Part of the 30S ribosomal subunit.

The protein localises to the plastid. The protein resides in the chloroplast. Functionally, one of the primary rRNA binding proteins, it binds directly to 16S rRNA where it nucleates assembly of the head domain of the 30S subunit. This is Small ribosomal subunit protein uS7c (rps7) from Mesostigma viride (Green alga).